A 145-amino-acid polypeptide reads, in one-letter code: uncharacterized protein (145 aa).

Residues Met1 to Ala20 form the signal peptide.

This is an uncharacterized protein from Aedes vexans (Inland floodwater mosquito).